The primary structure comprises 516 residues: MALLLVSSSSSYALRVTIFLSFFFFLCNGFSYPTTSSLFNTHHHRHHLAKHNYKDALTKSILFFEGQRSGKLPSNQRMSWRRDSGLSDGSALHVDLVGGYYDAGDNIKFGFPMAFTTTMLSWSVIEFGGLMKSELQNAKIAIRWATDYLLKATSQPDTIYVQVGDANKDHSCWERPEDMDTVRSVFKVDKNIPGSDVAAETAAALAAAAIVFRKSDPSYSKVLLKRAISVFAFADKYRGTYSAGLKPDVCPFYCSYSGYQDELLWGAAWLQKATKNIKYLNYIKINGQILGAAEYDNTFGWDNKHAGARILLTKAFLVQNVKTLHEYKGHADNFICSVIPGAPFSSTQYTPGGLLFKMADANMQYVTSTSFLLLTYAKYLTSAKTVVHCGGSVYTPGRLRSIAKRQVDYLLGDNPLRMSYMVGYGPKFPRRIHHRGSSLPCVASHPAKIQCHQGFAIMNSQSPNPNFLVGAVVGGPDQHDRFPDERSDYEQSEPATYINSPLVGALAYFAHAYGQL.

Positions 1–29 (MALLLVSSSSSYALRVTIFLSFFFFLCNG) are cleaved as a signal peptide. Aspartate 105 serves as the catalytic Nucleophile. Active-site residues include histidine 433, aspartate 484, and glutamate 493.

The protein belongs to the glycosyl hydrolase 9 (cellulase E) family.

Its subcellular location is the secreted. The enzyme catalyses Endohydrolysis of (1-&gt;4)-beta-D-glucosidic linkages in cellulose, lichenin and cereal beta-D-glucans.. The chain is Endoglucanase 17 from Arabidopsis thaliana (Mouse-ear cress).